We begin with the raw amino-acid sequence, 148 residues long: uncharacterized protein (148 aa).

This is an uncharacterized protein from Archaeoglobus fulgidus (strain ATCC 49558 / DSM 4304 / JCM 9628 / NBRC 100126 / VC-16).